A 359-amino-acid polypeptide reads, in one-letter code: Fe-S cluster assembly protein DRE2 (359 aa).

The interval 1 to 159 is N-terminal SAM-like domain; it reads MANILLLLHP…LFKKLSSNSN (159 aa). The tract at residues 152 to 187 is disordered; it reads KKLSSNSNNNNNSSSPIGLTDSSAANTDEETDEANV. The segment covering 155 to 166 has biased composition (low complexity); sequence SSNSNNNNNSSS. The linker stretch occupies residues 159–228; it reads NNNNNSSSPI…DDLIKDSNQL (70 aa). Residues 167-177 are compositionally biased toward polar residues; sequence PIGLTDSSAAN. Cysteine 240, cysteine 252, cysteine 255, and cysteine 257 together coordinate [2Fe-2S] cluster. The segment at 240-257 is fe-S binding site A; it reads CEIPNGKKRRKACKDCTC. [4Fe-4S] cluster is bound by residues cysteine 322, cysteine 325, cysteine 333, and cysteine 336. 2 consecutive short sequence motifs (cx2C motif) follow at residues 322 to 325 and 333 to 336; these read CGSC and CDGC. Residues 322-336 form a fe-S binding site B region; it reads CGSCALGDAFRCDGC.

Belongs to the anamorsin family. In terms of assembly, monomer. Interacts with TAH18. Interacts with MIA40. The cofactor is [2Fe-2S] cluster. [4Fe-4S] cluster serves as cofactor.

Its subcellular location is the cytoplasm. It is found in the mitochondrion intermembrane space. Component of the cytosolic iron-sulfur (Fe-S) protein assembly (CIA) machinery required for the maturation of extramitochondrial Fe-S proteins. Part of an electron transfer chain functioning in an early step of cytosolic Fe-S biogenesis, facilitating the de novo assembly of a [4Fe-4S] cluster on the scaffold complex CFD1-NBP35. Electrons are transferred to DRE2 from NADPH via the FAD- and FMN-containing protein TAH18. TAH18-DRE2 are also required for the assembly of the diferric tyrosyl radical cofactor of ribonucleotide reductase (RNR), probably by providing electrons for reduction during radical cofactor maturation in the catalytic small subunit RNR2. This chain is Fe-S cluster assembly protein DRE2, found in Scheffersomyces stipitis (strain ATCC 58785 / CBS 6054 / NBRC 10063 / NRRL Y-11545) (Yeast).